The chain runs to 88 residues: UPF0213 protein SAG0778 (88 aa).

Residues 4–80 form the GIY-YIG domain; it reads VPAYMYVLEC…QKTRQAKLTY (77 aa).

This sequence belongs to the UPF0213 family.

The chain is UPF0213 protein SAG0778 from Streptococcus agalactiae serotype V (strain ATCC BAA-611 / 2603 V/R).